A 190-amino-acid polypeptide reads, in one-letter code: Small ribosomal subunit protein eS7 (190 aa).

Belongs to the eukaryotic ribosomal protein eS7 family. Component of the small ribosomal subunit. Part of the small subunit (SSU) processome, composed of more than 70 proteins and the RNA chaperone small nucleolar RNA (snoRNA) U3.

It localises to the cytoplasm. Its subcellular location is the cytoskeleton. The protein localises to the microtubule organizing center. It is found in the centrosome. The protein resides in the nucleus. It localises to the nucleolus. Its function is as follows. Component of the small ribosomal subunit. The ribosome is a large ribonucleoprotein complex responsible for the synthesis of proteins in the cell. Required for rRNA maturation. Part of the small subunit (SSU) processome, first precursor of the small eukaryotic ribosomal subunit. During the assembly of the SSU processome in the nucleolus, many ribosome biogenesis factors, an RNA chaperone and ribosomal proteins associate with the nascent pre-rRNA and work in concert to generate RNA folding, modifications, rearrangements and cleavage as well as targeted degradation of pre-ribosomal RNA by the RNA exosome. The polypeptide is Small ribosomal subunit protein eS7 (RpS7) (Spodoptera frugiperda (Fall armyworm)).